The chain runs to 257 residues: MPASMFSIDNILAARPRCKDSVLPVAPSAAAPVVFPALHGDSLYGASGGASSDYGAFYPRPVAPGGAGLPAAVSGSRLGYNNYFYGQLHVQAAPVGPACCGAVPPLGAQQCSCVPTPPGYEGPGSVLVSPVPHQMLPYMNVGTLSRTELQLLNQLHCRRKRRHRTIFTDEQLEALENLFQETKYPDVGTREQLARKVHLREEKVEVWFKNRRAKWRRQKRSSSEESENAEKWNKTSSSKASPEKREEEGKSDLDSDS.

The segment at residues 160 to 219 (KRRHRTIFTDEQLEALENLFQETKYPDVGTREQLARKVHLREEKVEVWFKNRRAKWRRQK) is a DNA-binding region (homeobox). The segment at 213–257 (AKWRRQKRSSSEESENAEKWNKTSSSKASPEKREEEGKSDLDSDS) is disordered. Over residues 241–257 (SPEKREEEGKSDLDSDS) the composition is skewed to basic and acidic residues.

This sequence belongs to the paired homeobox family. Bicoid subfamily.

It is found in the nucleus. Functionally, regulates chordin (CHRD). May play a role in spatial programing within discrete embryonic fields or lineage compartments during organogenesis. In concert with NKX3-2, plays a role in defining the structural components of the middle ear; required for the development of the entire tympanic ring. Probably involved in the regulatory networks that define neural crest cell fate specification and determine mesoderm cell lineages in mammals. The protein is Homeobox protein goosecoid (GSC) of Gorilla gorilla gorilla (Western lowland gorilla).